A 698-amino-acid polypeptide reads, in one-letter code: Pentatricopeptide repeat-containing protein 1, mitochondrial (698 aa).

Positions 49–88 are disordered; sequence SSSQLPLGQERQENTGSLGSDPSHSNSTATQEEDEEESFG. Residues 62–78 are compositionally biased toward polar residues; sequence NTGSLGSDPSHSNSTAT. 6 PPR repeats span residues 133 to 169, 170 to 204, 205 to 243, 244 to 278, 279 to 315, and 316 to 352; these read TPYW…RLQP, MESN…DLEP, SDAT…NFEL, NLKT…GHVV, TEET…GLQP, and SRDS…ATVL. Residues 392–419 form a disordered region; that stretch reads QALGPPEPPEARVPSKAQPEVDTKAEPS. PPR repeat units lie at residues 517-551, 552-583, and 584-618; these read DLTF…GLVP, NLQT…QVTP, and NSHI…RVPV. Residues 670–698 are disordered; that stretch reads HPWQKFRTKPQEDQDTRKEADDGCALGGR. Residues 678–690 are compositionally biased toward basic and acidic residues; the sequence is KPQEDQDTRKEAD.

Belongs to the PTCD1 family. In terms of assembly, associates with mitochondrial leucine tRNAs. Interacts with ELAC2.

The protein resides in the mitochondrion. It is found in the mitochondrion matrix. Mitochondrial protein implicated in negative regulation of leucine tRNA levels, as well as negative regulation of mitochondria-encoded proteins and COX activity. Also affects the 3'-processing of mitochondrial tRNAs. The polypeptide is Pentatricopeptide repeat-containing protein 1, mitochondrial (PTCD1) (Pongo abelii (Sumatran orangutan)).